Reading from the N-terminus, the 329-residue chain is Beta-1,3-galactosyltransferase 6 (329 aa).

At 1–11 (MKLLRRAWRRR) the chain is on the cytoplasmic side. A helical; Signal-anchor for type II membrane protein transmembrane segment spans residues 12 to 34 (AALGLGTLALCGAALLYLARCAA). At 35–329 (EPGDPRAMSG…QCCQRREGIP (295 aa)) the chain is on the lumenal side. An N-linked (GlcNAc...) asparagine glycan is attached at Asn-131.

The protein belongs to the glycosyltransferase 31 family. It depends on Mn(2+) as a cofactor. As to expression, ubiquitous.

It localises to the golgi apparatus. The protein localises to the golgi stack membrane. The catalysed reaction is 3-O-(beta-D-galactosyl-(1-&gt;4)-beta-D-xylosyl)-L-seryl-[protein] + UDP-alpha-D-galactose = 3-O-(beta-D-galactosyl-(1-&gt;3)-beta-D-galactosyl-(1-&gt;4)-beta-D-xylosyl)-L-seryl-[protein] + UDP + H(+). The protein operates within glycan metabolism; chondroitin sulfate biosynthesis. It functions in the pathway glycan metabolism; heparan sulfate biosynthesis. Beta-1,3-galactosyltransferase that transfers galactose from UDP-galactose to substrates with a terminal beta-linked galactose residue. Has a preference for galactose-beta-1,4-xylose that is found in the linker region of glycosaminoglycans, such as heparan sulfate and chondroitin sulfate. Has no activity towards substrates with terminal glucosamine or galactosamine residues. This Homo sapiens (Human) protein is Beta-1,3-galactosyltransferase 6 (B3GALT6).